Consider the following 500-residue polypeptide: Beta-glucosidase 2 (500 aa).

Residues 1-24 form the signal peptide; it reads MGAAAAAGFFFVLLFLSVQGGAVG. A beta-D-glucoside-binding residues include Q44 and H144. Residue E190 is the Proton donor of the active site. Residues C209 and C218 are joined by a disulfide bond. Residue N222 is glycosylated (N-linked (GlcNAc...) asparagine). A beta-D-glucoside contacts are provided by Y334 and E403. E403 functions as the Nucleophile in the catalytic mechanism. N410 carries an N-linked (GlcNAc...) asparagine glycan. W445 contributes to the a beta-D-glucoside binding site.

Belongs to the glycosyl hydrolase 1 family.

It carries out the reaction Hydrolysis of terminal, non-reducing beta-D-glucosyl residues with release of beta-D-glucose.. The polypeptide is Beta-glucosidase 2 (BGLU2) (Oryza sativa subsp. japonica (Rice)).